Reading from the N-terminus, the 538-residue chain is Ubiquitin domain-containing protein DSK2a (538 aa).

The 76-residue stretch at 18-93 (VAVNVRCSNG…VHMVRGFVPS (76 aa)) folds into the Ubiquitin-like domain. The segment at 95–120 (PSAPAANAGNQTTAPQAVGSNDSSNL) is disordered. The segment covering 102–119 (AGNQTTAPQAVGSNDSSN) has biased composition (polar residues). STI1 domains lie at 138-179 (GNAM…QNLM) and 192-231 (NPQMRELVDRNPELGHVLNDPSILRQTLEAARNPELMREM). The disordered stretch occupies residues 289–316 (QGVTTQGSDTSNNISAPNAETGTPNANP). 2 STI1 domains span residues 357-394 (SPLGATPDASQLSQILQNPAMSQMMQSVLSNPQYMNQL) and 398-433 (NPQLRSMLDMNPQLREMMQNPDFLRQFSSPEMMQQM). The 45-residue stretch at 491 to 535 (PPEERFATQLQQLQEMGFYDRAENIRALLATNGNVNAAVERLLGS) folds into the UBA domain.

In terms of assembly, interacts with 'Lys-48'-linked polyubiquitin chains via its UBA domain. Interacts with RPN10 and RPN13. Interacts with PEX2 and PEX12. In terms of tissue distribution, ubiquitous with a strong expression level in inflorescence.

The protein localises to the nucleus. It is found in the cytoplasm. Binds and presumably selects ubiquitin-conjugates for destruction. Prefers multiubiquitin chains rather than single ubiquitins, with a binding affinity for 'Lys-48'-linked ubiquitin chains. Acts as a ubiquitin receptor that associates with the 26S proteasomal docking subunit RPN10 for the indirect recognition of ubiquitinated substrates of ubiquitin/26S proteasome-mediated proteolysis (UPP). The sequence is that of Ubiquitin domain-containing protein DSK2a (DSK2A) from Arabidopsis thaliana (Mouse-ear cress).